Consider the following 315-residue polypeptide: DNA-directed RNA polymerase subunit alpha (315 aa).

The segment at 1 to 228 (MLEIEKPKIE…EHFKLFMTLT (228 aa)) is alpha N-terminal domain (alpha-NTD). The segment at 245–315 (KEKVLEMTIE…LGLGLRKSED (71 aa)) is alpha C-terminal domain (alpha-CTD).

The protein belongs to the RNA polymerase alpha chain family. As to quaternary structure, homodimer. The RNAP catalytic core consists of 2 alpha, 1 beta, 1 beta' and 1 omega subunit. When a sigma factor is associated with the core the holoenzyme is formed, which can initiate transcription.

It carries out the reaction RNA(n) + a ribonucleoside 5'-triphosphate = RNA(n+1) + diphosphate. Its function is as follows. DNA-dependent RNA polymerase catalyzes the transcription of DNA into RNA using the four ribonucleoside triphosphates as substrates. This Clostridium botulinum (strain Langeland / NCTC 10281 / Type F) protein is DNA-directed RNA polymerase subunit alpha.